The sequence spans 264 residues: Adenosylcobinamide-GDP ribazoletransferase (264 aa).

Transmembrane regions (helical) follow at residues 39-59 (IAYAVPLAGAAIGLAGAAILI), 63-83 (ALGLPNLVAAILAVLTCVLLT), 121-141 (ACALVFSLLLRVALLDGLLAL), 148-168 (LALIAAASLSRAAGMLLLEFL), 201-221 (LLIVPSTGVGATLMAIGLSVL), and 241-261 (VAGAVQQLCEIAFLMGVLIYA).

Belongs to the CobS family. Mg(2+) is required as a cofactor.

It localises to the cell inner membrane. It carries out the reaction alpha-ribazole + adenosylcob(III)inamide-GDP = adenosylcob(III)alamin + GMP + H(+). The catalysed reaction is alpha-ribazole 5'-phosphate + adenosylcob(III)inamide-GDP = adenosylcob(III)alamin 5'-phosphate + GMP + H(+). It participates in cofactor biosynthesis; adenosylcobalamin biosynthesis; adenosylcobalamin from cob(II)yrinate a,c-diamide: step 7/7. Its function is as follows. Joins adenosylcobinamide-GDP and alpha-ribazole to generate adenosylcobalamin (Ado-cobalamin). Also synthesizes adenosylcobalamin 5'-phosphate from adenosylcobinamide-GDP and alpha-ribazole 5'-phosphate. In Azorhizobium caulinodans (strain ATCC 43989 / DSM 5975 / JCM 20966 / LMG 6465 / NBRC 14845 / NCIMB 13405 / ORS 571), this protein is Adenosylcobinamide-GDP ribazoletransferase.